Reading from the N-terminus, the 611-residue chain is Procollagen galactosyltransferase 1-B (611 aa).

The N-terminal stretch at 1 to 24 (MSQAGVERLLKGLQILVLVLRLSA) is a signal peptide. Residues Asn85, Asn173, Asn370, Asn373, and Asn568 are each glycosylated (N-linked (GlcNAc...) asparagine). The segment covering 576-591 (DRAKSRKTHQQEKLRS) has biased composition (basic and acidic residues). Positions 576–611 (DRAKSRKTHQQEKLRSEALNTPSMGSPFDNTARDEL) are disordered. Residues 608-611 (RDEL) carry the Prevents secretion from ER motif.

It belongs to the glycosyltransferase 25 family.

It localises to the endoplasmic reticulum lumen. The enzyme catalyses (5R)-5-hydroxy-L-lysyl-[collagen] + UDP-alpha-D-galactose = (5R)-5-O-(beta-D-galactosyl)-5-hydroxy-L-lysyl-[collagen] + UDP + H(+). Its function is as follows. Beta-galactosyltransferase that transfers beta-galactose to hydroxylysine residues of type I collagen. By acting on collagen glycosylation, facilitates the formation of collagen triple helix. The sequence is that of Procollagen galactosyltransferase 1-B (colgalt1-b) from Xenopus laevis (African clawed frog).